Here is a 235-residue protein sequence, read N- to C-terminus: Leucyl/phenylalanyl-tRNA--protein transferase (235 aa).

This sequence belongs to the L/F-transferase family.

It localises to the cytoplasm. It carries out the reaction N-terminal L-lysyl-[protein] + L-leucyl-tRNA(Leu) = N-terminal L-leucyl-L-lysyl-[protein] + tRNA(Leu) + H(+). The catalysed reaction is N-terminal L-arginyl-[protein] + L-leucyl-tRNA(Leu) = N-terminal L-leucyl-L-arginyl-[protein] + tRNA(Leu) + H(+). It catalyses the reaction L-phenylalanyl-tRNA(Phe) + an N-terminal L-alpha-aminoacyl-[protein] = an N-terminal L-phenylalanyl-L-alpha-aminoacyl-[protein] + tRNA(Phe). Functionally, functions in the N-end rule pathway of protein degradation where it conjugates Leu, Phe and, less efficiently, Met from aminoacyl-tRNAs to the N-termini of proteins containing an N-terminal arginine or lysine. The polypeptide is Leucyl/phenylalanyl-tRNA--protein transferase (Shewanella frigidimarina (strain NCIMB 400)).